The following is a 1898-amino-acid chain: Protein NYNRIN (1898 aa).

Disordered regions lie at residues 289 to 315 (SNNQ…STNH), 424 to 450 (LPSA…CPRP), 467 to 533 (DVKD…TDQS), 618 to 691 (EPTT…TDAG), and 711 to 731 (VSLL…SGTL). Residues 618-627 (EPTTPKTPQA) show a composition bias toward polar residues. The span at 649 to 672 (PAATVSKAPAASKAPAAPKVPVTP) shows a compositional bias: low complexity. One can recognise an RNase NYN domain in the interval 792-942 (LRRVVIDGSS…LGRDGPTLDE (151 aa)). The segment at 968 to 1019 (SASVTELSDDADSGPLESLPNMEEVREEKEERQDEEQRQGQGTQKAAEEDDL) is disordered. Residues 990 to 1005 (EEVREEKEERQDEEQR) are compositionally biased toward basic and acidic residues. The region spanning 1304–1450 (LSTFVCIHMS…VDTLAKQGAQ (147 aa)) is the RNase H type-1 domain. The next 2 membrane-spanning stretches (helical) occupy residues 1372–1392 (VVFL…LPLW) and 1408–1428 (PSLL…PFIY). The 166-residue stretch at 1609-1774 (RSTAPWSNLQ…ESRLTEPLWW (166 aa)) folds into the Integrase catalytic domain.

The protein localises to the membrane. This Homo sapiens (Human) protein is Protein NYNRIN (NYNRIN).